The chain runs to 374 residues: tRNA-specific 2-thiouridylase MnmA (374 aa).

ATP contacts are provided by residues 17–24 (GMSGGVDS) and methionine 43. Residues 103 to 105 (NPD) are interaction with target base in tRNA. The active-site Nucleophile is the cysteine 108. The cysteines at positions 108 and 204 are disulfide-linked. Glycine 132 is an ATP binding site. An interaction with tRNA region spans residues 154 to 156 (KDQ). Cysteine 204 serves as the catalytic Cysteine persulfide intermediate. Positions 316-317 (RY) are interaction with tRNA.

The protein belongs to the MnmA/TRMU family.

The protein localises to the cytoplasm. It catalyses the reaction S-sulfanyl-L-cysteinyl-[protein] + uridine(34) in tRNA + AH2 + ATP = 2-thiouridine(34) in tRNA + L-cysteinyl-[protein] + A + AMP + diphosphate + H(+). Functionally, catalyzes the 2-thiolation of uridine at the wobble position (U34) of tRNA, leading to the formation of s(2)U34. In Pseudomonas fluorescens (strain SBW25), this protein is tRNA-specific 2-thiouridylase MnmA.